The following is a 636-amino-acid chain: Poly(3-hydroxyalkanoate) polymerase subunit PhaC (636 aa).

Disordered regions lie at residues 1–38 (MYNK…DATD) and 129–152 (QGTR…KRFS). Positions 143–152 (PDTRKDKRFS) are enriched in basic and acidic residues. Residue cysteine 373 is part of the active site.

The protein belongs to the PHA/PHB synthase family. Type I PhaC subfamily.

It localises to the cytoplasm. The catalysed reaction is (3R)-3-hydroxybutanoyl-CoA + [(3R)-hydroxybutanoate](n) = [(3R)-hydroxybutanoate](n+1) + CoA. It participates in biopolymer metabolism; poly-(R)-3-hydroxybutanoate biosynthesis. In terms of biological role, polymerizes D(-)-3-hydroxybutyryl-CoA to create PHB which consists of thousands of hydroxybutyrate molecules linked end to end. PHB serves as an intracellular energy reserve material when cells grow under conditions of nutrient limitation. The polypeptide is Poly(3-hydroxyalkanoate) polymerase subunit PhaC (Rhizobium etli (strain ATCC 51251 / DSM 11541 / JCM 21823 / NBRC 15573 / CFN 42)).